We begin with the raw amino-acid sequence, 396 residues long: 12-oxophytodienoate reductase 3 (396 aa).

FMN contacts are provided by residues 31 to 33 (PMT), glycine 64, and glutamine 106. Residue 185 to 188 (HGAH) participates in substrate binding. The active-site Proton donor is tyrosine 190. Arginine 237 contributes to the FMN binding site. Arginine 283 is a substrate binding site. FMN is bound by residues glycine 321 and 342 to 343 (GR). The segment at 342-343 (GR) is FMN. Positions 394-396 (SRL) match the Microbody targeting signal motif.

The protein belongs to the NADH:flavin oxidoreductase/NADH oxidase family. The cofactor is FMN. Expressed in roots and to a lower extent in leaves and flowers.

It is found in the peroxisome. It carries out the reaction (1S,2S)-OPC-8 + NADP(+) = (9S,13S,15Z)-12-oxophyto-10,15-dienoate + NADPH + H(+). It functions in the pathway lipid metabolism; oxylipin biosynthesis. Specifically cleaves olefinic bonds in cyclic enones. Involved in the biosynthesis of jasmonic acid (JA) and perhaps in biosynthesis or metabolism of other oxylipin signaling moleclules. It is required for the spatial and temporal regulation of JA levels during dehiscence of anthers, promoting the stomium degeneration program. In vitro, reduces 9S,13S-12-oxophytodienoic acid (9S,13S-OPDA) and 9R,13R-OPDA to 9S,13S-OPC-8:0 and 9R,13R-OPC-8:0, respectively. The protein is 12-oxophytodienoate reductase 3 (OPR3) of Solanum lycopersicum (Tomato).